Reading from the N-terminus, the 373-residue chain is tRNA (guanine(26)-N(2))-dimethyltransferase (373 aa).

The Trm1 methyltransferase domain maps to 2 to 365 (KIISEGETKL…AELSDLVVLI (364 aa)). The S-adenosyl-L-methionine site is built by Arg-35, Arg-66, Asp-86, Asp-113, and Ala-114.

It belongs to the class I-like SAM-binding methyltransferase superfamily. Trm1 family.

It carries out the reaction guanosine(26) in tRNA + 2 S-adenosyl-L-methionine = N(2)-dimethylguanosine(26) in tRNA + 2 S-adenosyl-L-homocysteine + 2 H(+). Dimethylates a single guanine residue at position 26 of a number of tRNAs using S-adenosyl-L-methionine as donor of the methyl groups. The sequence is that of tRNA (guanine(26)-N(2))-dimethyltransferase from Methanococcus maripaludis (strain C6 / ATCC BAA-1332).